The chain runs to 74 residues: Peptide BmKa2 (74 aa).

An N-terminal signal peptide occupies residues 1–24 (MSSKTLLVLLLVGVLVSTFFTADA).

This sequence belongs to the non-disulfide-bridged peptide (NDBP) superfamily. Long chain multifunctional peptide (group 2) family. In terms of tissue distribution, expressed by the venom gland.

It is found in the secreted. Functionally, highly acidic peptide that may have antibacterial activity. This chain is Peptide BmKa2, found in Olivierus martensii (Manchurian scorpion).